Here is a 98-residue protein sequence, read N- to C-terminus: NADH-ubiquinone oxidoreductase chain 4L (98 aa).

Helical transmembrane passes span 2 to 22, 29 to 49, and 61 to 81; these read PSISTNIVLAFITALLGMLIF, SLLCLEGMMLSMFILSTLTIL, and ILLLVFAACEAAVGLALLVTV.

Belongs to the complex I subunit 4L family. In terms of assembly, core subunit of respiratory chain NADH dehydrogenase (Complex I) which is composed of 45 different subunits.

Its subcellular location is the mitochondrion inner membrane. The catalysed reaction is a ubiquinone + NADH + 5 H(+)(in) = a ubiquinol + NAD(+) + 4 H(+)(out). Functionally, core subunit of the mitochondrial membrane respiratory chain NADH dehydrogenase (Complex I) which catalyzes electron transfer from NADH through the respiratory chain, using ubiquinone as an electron acceptor. Part of the enzyme membrane arm which is embedded in the lipid bilayer and involved in proton translocation. The sequence is that of NADH-ubiquinone oxidoreductase chain 4L (MT-ND4L) from Eulemur rubriventer (Red-bellied lemur).